A 272-amino-acid chain; its full sequence is uncharacterized protein (272 aa).

NAD(+) is bound by residues 12 to 34 (FITGAARGLGRAHAVRLAADGAN), 39 to 40 (DI), 77 to 78 (DV), and N104. S153 is a binding site for substrate. Catalysis depends on Y170, which acts as the Proton acceptor. NAD(+) is bound by residues K174 and 203–205 (VDT).

Belongs to the short-chain dehydrogenases/reductases (SDR) family.

This is an uncharacterized protein from Mycobacterium tuberculosis (strain CDC 1551 / Oshkosh).